Here is a 510-residue protein sequence, read N- to C-terminus: Bifunctional purine biosynthesis protein PurH (510 aa).

An MGS-like domain is found at 1-143 (MTKRALISVS…KNHDAVLVLV (143 aa)).

The protein belongs to the PurH family.

The enzyme catalyses (6R)-10-formyltetrahydrofolate + 5-amino-1-(5-phospho-beta-D-ribosyl)imidazole-4-carboxamide = 5-formamido-1-(5-phospho-D-ribosyl)imidazole-4-carboxamide + (6S)-5,6,7,8-tetrahydrofolate. It carries out the reaction IMP + H2O = 5-formamido-1-(5-phospho-D-ribosyl)imidazole-4-carboxamide. It participates in purine metabolism; IMP biosynthesis via de novo pathway; 5-formamido-1-(5-phospho-D-ribosyl)imidazole-4-carboxamide from 5-amino-1-(5-phospho-D-ribosyl)imidazole-4-carboxamide (10-formyl THF route): step 1/1. It functions in the pathway purine metabolism; IMP biosynthesis via de novo pathway; IMP from 5-formamido-1-(5-phospho-D-ribosyl)imidazole-4-carboxamide: step 1/1. The chain is Bifunctional purine biosynthesis protein PurH from Deinococcus radiodurans (strain ATCC 13939 / DSM 20539 / JCM 16871 / CCUG 27074 / LMG 4051 / NBRC 15346 / NCIMB 9279 / VKM B-1422 / R1).